The primary structure comprises 53 residues: uncharacterized protein (53 aa).

Its subcellular location is the mitochondrion. This is an uncharacterized protein from Saccharomyces cerevisiae (strain ATCC 204508 / S288c) (Baker's yeast).